A 1067-amino-acid polypeptide reads, in one-letter code: [F-actin]-monooxygenase MICAL1 (1067 aa).

Positions 1–489 (MASPTSTNPA…RDLYDVLAKE (489 aa)) are monooxygenase domain. Residues Cys95, 114–116 (EKR), 121–123 (RHN), Phe181, Tyr293, and Asp393 each bind FAD. Residue Thr475 is modified to Phosphothreonine. Residues 508-612 (AGTQEELLRW…YLSHFHSAFK (105 aa)) form the Calponin-homology (CH) domain. Position 617 is a phosphoserine (Ser617). Residues 645–688 (SRAKENAEDAGGKKLRLEMEAETPSTEVPPDPEPGVPLTPPSQH) are disordered. The span at 646–663 (RAKENAEDAGGKKLRLEM) shows a compositional bias: basic and acidic residues. Residues 646–666 (RAKENAEDAGGKKLRLEMEAE) adopt a coiled-coil conformation. The span at 671–684 (EVPPDPEPGVPLTP) shows a compositional bias: pro residues. Residues 695 to 757 (DLCALCGEHL…LQHLPQTDHK (63 aa)) enclose the LIM zinc-binding domain. Zn(2+) contacts are provided by Cys697, Cys700, His718, Cys721, Cys724, Cys727, Cys747, and His750. Residues 755–766 (DHKAEGSDRGPE) show a composition bias toward basic and acidic residues. Disordered regions lie at residues 755–838 (DHKA…RSCS) and 867–886 (KEEK…VPLD). The span at 773 to 789 (PSENSMPPGLSTPTASQ) shows a compositional bias: polar residues. A phosphoserine mark is found at Ser872, Ser875, and Ser876. The segment covering 876-886 (SEEEEEDVPLD) has biased composition (acidic residues). The tract at residues 901–1067 (GTMNNYPTWR…ELALGTGAQG (167 aa)) is important for interaction with RAB8A. The 150-residue stretch at 918–1067 (KEEEMKRFCK…ELALGTGAQG (150 aa)) folds into the bMERB domain. 2 coiled-coil regions span residues 919–962 (EEEM…QSSS) and 999–1027 (NLEE…AADR). Phosphoserine is present on Ser1057.

The protein belongs to the Mical family. In terms of assembly, interacts with STK38 and STK38L. Interacts with RAB1B, RAB8A, RAB10, RAB13, RAB15 and RAB35 (in their GTP-bound forms); binding to RAB1B is of low affinity compared to other Rab proteins; at least in case of RAB8A and RAB10 can bind 2 molecules of the Rab proteins simultaneously; ternary complex formation of RAB8A, RAB13 and MICAL1 is possible. Associates with the SH3 domain of NEDD9. Interacts with VIM and PLXNA3. Interacts with GRAF1/ARHGAP26, GRAF2/ARHGAP10, RAB8A, RAB8B and RAB10; may bind simultaneously to GRAFs and Rabs and connects GRAFs to Rabs. Does not interact with RAB1 and RAB11A. Requires FAD as cofactor. As to expression, expressed in the thymus, lung, spleen, kidney, testis and hematopoietic cells.

It localises to the cytoplasm. It is found in the cytoskeleton. The protein resides in the endosome membrane. Its subcellular location is the midbody. The enzyme catalyses L-methionyl-[F-actin] + NADPH + O2 + H(+) = L-methionyl-(R)-S-oxide-[F-actin] + NADP(+) + H2O. It catalyses the reaction NADPH + O2 + H(+) = H2O2 + NADP(+). In terms of biological role, monooxygenase that promotes depolymerization of F-actin by mediating oxidation of specific methionine residues on actin to form methionine-sulfoxide, resulting in actin filament disassembly and preventing repolymerization. In the absence of actin, it also functions as a NADPH oxidase producing H(2)O(2). Acts as a cytoskeletal regulator that connects NEDD9 to intermediate filaments. Also acts as a negative regulator of apoptosis via its interaction with STK38 and STK38L; acts by antagonizing STK38 and STK38L activation by MST1/STK4. Involved in regulation of lamina-specific connectivity in the nervous system such as the development of lamina-restricted hippocampal connections. Through redox regulation of the actin cytoskeleton controls the intracellular distribution of secretory vesicles containing L1/neurofascin/NgCAM family proteins in neurons, thereby regulating their cell surface levels. May act as Rab effector protein and play a role in vesicle trafficking. Promotes endosomal tubule extension by associating with RAB8 (RAB8A or RAB8B), RAB10 and GRAF (GRAF1/ARHGAP26 or GRAF2/ARHGAP10) on the endosomal membrane which may connect GRAFs to Rabs, thereby participating in neosynthesized Rab8-Rab10-Rab11-dependent protein export. The chain is [F-actin]-monooxygenase MICAL1 (MICAL1) from Homo sapiens (Human).